Consider the following 163-residue polypeptide: 3-hydroxyacyl-[acyl-carrier-protein] dehydratase FabZ (163 aa).

His-64 is an active-site residue.

This sequence belongs to the thioester dehydratase family. FabZ subfamily.

The protein resides in the cytoplasm. The enzyme catalyses a (3R)-hydroxyacyl-[ACP] = a (2E)-enoyl-[ACP] + H2O. Its function is as follows. Involved in unsaturated fatty acids biosynthesis. Catalyzes the dehydration of short chain beta-hydroxyacyl-ACPs and long chain saturated and unsaturated beta-hydroxyacyl-ACPs. This is 3-hydroxyacyl-[acyl-carrier-protein] dehydratase FabZ from Caulobacter sp. (strain K31).